Here is a 104-residue protein sequence, read N- to C-terminus: Large ribosomal subunit protein bL21 (104 aa).

Belongs to the bacterial ribosomal protein bL21 family. In terms of assembly, part of the 50S ribosomal subunit. Contacts protein L20.

In terms of biological role, this protein binds to 23S rRNA in the presence of protein L20. This Helicobacter pylori (strain G27) protein is Large ribosomal subunit protein bL21.